The following is a 246-amino-acid chain: Triosephosphate isomerase (246 aa).

A substrate-binding site is contributed by 9–11; it reads NWK. Histidine 99 acts as the Electrophile in catalysis. The active-site Proton acceptor is glutamate 168. Residues glycine 174, serine 207, and 228-229 contribute to the substrate site; that span reads GG.

The protein belongs to the triosephosphate isomerase family. Homodimer.

The protein localises to the cytoplasm. It catalyses the reaction D-glyceraldehyde 3-phosphate = dihydroxyacetone phosphate. The protein operates within carbohydrate biosynthesis; gluconeogenesis. Its pathway is carbohydrate degradation; glycolysis; D-glyceraldehyde 3-phosphate from glycerone phosphate: step 1/1. Involved in the gluconeogenesis. Catalyzes stereospecifically the conversion of dihydroxyacetone phosphate (DHAP) to D-glyceraldehyde-3-phosphate (G3P). The sequence is that of Triosephosphate isomerase from Prochlorococcus marinus (strain NATL2A).